Reading from the N-terminus, the 429-residue chain is Adenylosuccinate synthetase (429 aa).

GTP-binding positions include 12–18 (GDEGKGK) and 40–42 (GHT). The Proton acceptor role is filled by D13. Positions 13 and 40 each coordinate Mg(2+). IMP is bound by residues 13–16 (DEGK), 38–41 (NAGH), T128, R142, Q223, T238, and R302. The active-site Proton donor is H41. A substrate-binding site is contributed by 298–304 (VNTGRPR). GTP is bound by residues R304, 330–332 (KLD), and 412–414 (GVG).

Belongs to the adenylosuccinate synthetase family. As to quaternary structure, homodimer. The cofactor is Mg(2+).

The protein resides in the cytoplasm. The enzyme catalyses IMP + L-aspartate + GTP = N(6)-(1,2-dicarboxyethyl)-AMP + GDP + phosphate + 2 H(+). Its pathway is purine metabolism; AMP biosynthesis via de novo pathway; AMP from IMP: step 1/2. In terms of biological role, plays an important role in the de novo pathway of purine nucleotide biosynthesis. Catalyzes the first committed step in the biosynthesis of AMP from IMP. The sequence is that of Adenylosuccinate synthetase from Renibacterium salmoninarum (strain ATCC 33209 / DSM 20767 / JCM 11484 / NBRC 15589 / NCIMB 2235).